Here is a 923-residue protein sequence, read N- to C-terminus: Hexokinase-3 (923 aa).

Residues Met-1–Cys-18 are compositionally biased toward polar residues. The disordered stretch occupies residues Met-1–Ser-30. 2 Hexokinase domains span residues Ser-27–Ala-471 and Ala-477–Ala-912. Residues His-84–Val-220 are hexokinase small subdomain 1. An ATP-binding site is contributed by Glu-95–Ser-102. Glu-95–Arg-104 contributes to the D-glucose 6-phosphate binding site. Residues Ser-168, Thr-185–Lys-186, and Asn-221–Asp-222 each bind D-glucose. A hexokinase large subdomain 1 region spans residues Asn-221–Asp-460. Residues Asp-222 and Thr-245 each contribute to the D-glucose 6-phosphate site. D-glucose contacts are provided by residues Asn-248, Glu-273, and Gln-304–Glu-307. Position 426–428 (Gly-426–Arg-428) interacts with D-glucose 6-phosphate. Residues Ser-438 to Val-439 and Asp-542 to Asn-547 contribute to the ATP site. The tract at residues Asp-531–Val-661 is hexokinase small subdomain 2. A D-glucose 6-phosphate-binding site is contributed by Asp-542–Thr-546. D-glucose-binding positions include Ser-609–Phe-610, Thr-626–Lys-627, and Asn-662–Asp-663. Residues Asn-662–Asp-901 form a hexokinase large subdomain 2 region. D-glucose 6-phosphate-binding residues include Asp-663 and Thr-686. Thr-686 is an ATP binding site. D-glucose-binding positions include Thr-688–Asn-689, Glu-714, and Glu-748. Residues Gly-753 to Met-754, Thr-790 to Ser-794, and Thr-869 to Leu-873 each bind ATP. Residues Asp-867–Thr-869 and Ser-903 each bind D-glucose 6-phosphate.

The protein belongs to the hexokinase family.

The catalysed reaction is a D-hexose + ATP = a D-hexose 6-phosphate + ADP + H(+). It catalyses the reaction D-fructose + ATP = D-fructose 6-phosphate + ADP + H(+). The enzyme catalyses D-glucose + ATP = D-glucose 6-phosphate + ADP + H(+). The protein operates within carbohydrate metabolism; hexose metabolism. It functions in the pathway carbohydrate degradation; glycolysis; D-glyceraldehyde 3-phosphate and glycerone phosphate from D-glucose: step 1/4. Its activity is regulated as follows. Hexokinase is an allosteric enzyme inhibited by its product D-glucose 6-phosphate. Its function is as follows. Catalyzes the phosphorylation of hexose, such as D-glucose and D-fructose, to hexose 6-phosphate (D-glucose 6-phosphate and D-fructose 6-phosphate, respectively). Mediates the initial step of glycolysis by catalyzing phosphorylation of D-glucose to D-glucose 6-phosphate. This is Hexokinase-3 from Homo sapiens (Human).